The sequence spans 125 residues: Small ribosomal subunit protein uS13 (125 aa).

Belongs to the universal ribosomal protein uS13 family. Part of the 30S ribosomal subunit. Forms a loose heterodimer with protein S19. Forms two bridges to the 50S subunit in the 70S ribosome.

Its function is as follows. Located at the top of the head of the 30S subunit, it contacts several helices of the 16S rRNA. In the 70S ribosome it contacts the 23S rRNA (bridge B1a) and protein L5 of the 50S subunit (bridge B1b), connecting the 2 subunits; these bridges are implicated in subunit movement. Contacts the tRNAs in the A and P-sites. The protein is Small ribosomal subunit protein uS13 of Orientia tsutsugamushi (strain Boryong) (Rickettsia tsutsugamushi).